Consider the following 660-residue polypeptide: ATP-dependent RNA helicase DDX18 (660 aa).

A disordered region spans residues 16 to 153; sequence RNAKLRQRNL…DVKKADDSEV (138 aa). The span at 25 to 40 shows a compositional bias: polar residues; the sequence is LKLQETSDTSLSQPQN. The span at 124–133 shows a compositional bias: basic and acidic residues; that stretch reads PDTKKAKTEE. Residues 134 to 143 show a composition bias toward acidic residues; it reads SAEACEEPED. The Q motif signature appears at 169 to 197; sequence FASLSNLVNENTLKAIEEMGFKRMTEIQH. Residues 200–375 form the Helicase ATP-binding domain; sequence IRPLLEGRDL…RISLKKEPLY (176 aa). 213–220 lines the ATP pocket; that stretch reads AKTGSGKT. A DEAD box motif is present at residues 323–326; the sequence is DEAD. Positions 389–559 constitute a Helicase C-terminal domain; sequence GLEQGYVVCP…DIQSQLEKLI (171 aa).

It belongs to the DEAD box helicase family. DDX18/HAS1 subfamily. Interacts with NOL8; the interaction is RNA-dependent. Interacts with PRC2 complex components EZH2, SUZ2 and JARID2; these interactions prevent deposition of the repressive H3K27me3 mark onto rDNA in pluripotent cells.

It is found in the nucleus. The protein resides in the nucleolus. The protein localises to the chromosome. It carries out the reaction ATP + H2O = ADP + phosphate + H(+). Functionally, ATP-dependent RNA helicase that plays a role in the regulation of R-loop homeostasis in both endogenous R-loop-prone regions and at sites of DNA damage. At endogenous loci such as actively transcribed genes, may act as a helicase to resolve the formation of R-loop during transcription and prevent the interference of R-loop with DNA-replication machinery. Also participates in the removal of DNA-lesion-associated R-loop. Plays an essential role for establishing pluripotency during embryogenesis and for pluripotency maintenance in embryonic stem cells. Mechanistically, prevents the polycomb repressive complex 2 (PRC2) from accessing rDNA loci and protects the active chromatin status in nucleolus. This is ATP-dependent RNA helicase DDX18 (Ddx18) from Mus musculus (Mouse).